We begin with the raw amino-acid sequence, 204 residues long: Small ribosomal subunit protein uS4 (204 aa).

The tract at residues 1–46 is disordered; the sequence is MSKRHSSKYKIDRRMGENIWGRPKSPVNRREYGPGQHGQRRRSKIS. In terms of domain architecture, S4 RNA-binding spans 94 to 157; the sequence is RRLDMIVYRA…QEMALVLEAQ (64 aa).

This sequence belongs to the universal ribosomal protein uS4 family. Part of the 30S ribosomal subunit. Contacts protein S5. The interaction surface between S4 and S5 is involved in control of translational fidelity.

In terms of biological role, one of the primary rRNA binding proteins, it binds directly to 16S rRNA where it nucleates assembly of the body of the 30S subunit. Functionally, with S5 and S12 plays an important role in translational accuracy. This Zymomonas mobilis subsp. mobilis (strain ATCC 31821 / ZM4 / CP4) protein is Small ribosomal subunit protein uS4.